A 236-amino-acid chain; its full sequence is 15,16-dihydrobiliverdin:ferredoxin oxidoreductase (236 aa).

Belongs to the HY2 family.

It carries out the reaction 15,16-dihydrobiliverdin + oxidized 2[4Fe-4S]-[ferredoxin] = biliverdin IXalpha + reduced 2[4Fe-4S]-[ferredoxin] + 2 H(+). Functionally, catalyzes the two-electron reduction of biliverdin IX-alpha at the C15 methine bridge. This Prochlorococcus marinus (strain AS9601) protein is 15,16-dihydrobiliverdin:ferredoxin oxidoreductase.